The chain runs to 629 residues: Phosphoglucomutase, chloroplastic (629 aa).

The transit peptide at 1–69 (MSSTYARFDT…SSSSGPIIAG (69 aa)) directs the protein to the chloroplast. Residues R94 and S187 each coordinate alpha-D-glucose 1,6-bisphosphate. The Phosphoserine intermediate role is filled by S187. Mg(2+) is bound by residues S187, D352, D354, and D356. S187 is modified (phosphoserine). Positions 356, 357, 420, 439, 441, and 452 each coordinate alpha-D-glucose 1,6-bisphosphate.

The protein belongs to the phosphohexose mutase family. As to quaternary structure, monomer. Requires Mg(2+) as cofactor.

Its subcellular location is the plastid. The protein resides in the chloroplast. The enzyme catalyses alpha-D-glucose 1-phosphate = alpha-D-glucose 6-phosphate. The catalysed reaction is O-phospho-L-seryl-[protein] + alpha-D-glucose 1-phosphate = alpha-D-glucose 1,6-bisphosphate + L-seryl-[protein]. It carries out the reaction alpha-D-glucose 1,6-bisphosphate + L-seryl-[protein] = O-phospho-L-seryl-[protein] + alpha-D-glucose 6-phosphate. Its activity is regulated as follows. Inhibited by the Calvin cycle intermediates fructose-1,6-bisphosphate and ribulose-1,5-bisphosphate. Its function is as follows. Catalyzes the reversible isomerization of alpha-D-glucose 1-phosphate to alpha-D-glucose 6-phosphate. The mechanism proceeds via the intermediate compound alpha-D-glucose 1,6-bisphosphate. This enzyme participates in both the breakdown and synthesis of glucose. This Brassica napus (Rape) protein is Phosphoglucomutase, chloroplastic (PGMP).